We begin with the raw amino-acid sequence, 227 residues long: Uracil-DNA glycosylase (227 aa).

D65 (proton acceptor) is an active-site residue.

It belongs to the uracil-DNA glycosylase (UDG) superfamily. UNG family.

Its subcellular location is the cytoplasm. The catalysed reaction is Hydrolyzes single-stranded DNA or mismatched double-stranded DNA and polynucleotides, releasing free uracil.. Functionally, excises uracil residues from the DNA which can arise as a result of misincorporation of dUMP residues by DNA polymerase or due to deamination of cytosine. The polypeptide is Uracil-DNA glycosylase (Lactobacillus delbrueckii subsp. bulgaricus (strain ATCC BAA-365 / Lb-18)).